Consider the following 177-residue polypeptide: Immunity protein CdiI-YPIII (177 aa).

Interacts with the C-terminal DNase fragment (residues 954-1077) of cognate toxin CdiA-YPIII.

Immunity protein component of a toxin-immunity protein module, which functions as a cellular contact-dependent growth inhibition (CDI) system. CDI modules allow bacteria to communicate with and inhibit the growth of closely related neighboring bacteria in a contact-dependent fashion. Neutralizes the toxic activity of cognate toxin CdiA-YPIII (residues 954-1077). Does not inhibit toxic activity of CdiA from other toxin-immunity modules. This chain is Immunity protein CdiI-YPIII, found in Yersinia pseudotuberculosis serotype O:3 (strain YPIII).